We begin with the raw amino-acid sequence, 197 residues long: Adrenodoxin-like protein 1, mitochondrial (197 aa).

The transit peptide at 1–35 directs the protein to the mitochondrion; sequence MIGHRISRLGSTIVKQLAREGYLATYGTKNLHRSY. Residues 79–184 form the 2Fe-2S ferredoxin-type domain; sequence EKITIIFVDK…GVRLAIPSAT (106 aa). The [2Fe-2S] cluster site is built by Cys118, Cys124, Cys127, and Cys165.

This sequence belongs to the adrenodoxin/putidaredoxin family. [2Fe-2S] cluster serves as cofactor.

Its subcellular location is the mitochondrion matrix. Associates in vitro with the adrenodoxin reductase MFDR to form an efficient low potential electron transfer chain that is able to reduce cytochrome C. Functions as accessory mitochondrial protein involved with BIO2 in the plant biotin synthase reaction. The protein is Adrenodoxin-like protein 1, mitochondrial of Arabidopsis thaliana (Mouse-ear cress).